Here is a 398-residue protein sequence, read N- to C-terminus: Leucine carboxyl methyltransferase 1 (398 aa).

Positions 1 to 11 (MSASQIPNLNT) are enriched in polar residues. Positions 1–54 (MSASQIPNLNTLRRGGGRGRLRGRGGFETGAPSEDRHGSRGLAAQDRVVQGTDN) are disordered. S-adenosyl-L-methionine-binding positions include Arg97, Gly123, Asp151, and 201–202 (DL). The segment covering 208-218 (SGSATTSRSPS) has biased composition (low complexity). A disordered region spans residues 208–232 (SGSATTSRSPSSPNPAEKDQPPCPL). Glu246 contacts S-adenosyl-L-methionine.

The protein belongs to the methyltransferase superfamily. LCMT family.

The enzyme catalyses [phosphatase 2A protein]-C-terminal L-leucine + S-adenosyl-L-methionine = [phosphatase 2A protein]-C-terminal L-leucine methyl ester + S-adenosyl-L-homocysteine. Functionally, methylates the carboxyl group of the C-terminal leucine residue of protein phosphatase 2A catalytic subunits to form alpha-leucine ester residues. This Aspergillus fumigatus (strain ATCC MYA-4609 / CBS 101355 / FGSC A1100 / Af293) (Neosartorya fumigata) protein is Leucine carboxyl methyltransferase 1 (ppm1).